We begin with the raw amino-acid sequence, 1463 residues long: Secretory phospholipase A2 receptor (1463 aa).

The signal sequence occupies residues 1-20; that stretch reads MPLLSLSLLLLLLQVPAGSA. The Extracellular segment spans residues 21–1392; the sequence is ETAAWAVTPE…IHTVKKHPGK (1372 aa). The region spanning 38–115 is the Ricin B-type lectin domain; the sequence is KGIFIIQSEN…CDSTHVSLKW (78 aa). Residue Asn93 is glycosylated (N-linked (GlcNAc...) asparagine). Residues 173–221 enclose the Fibronectin type-II domain; it reads AHGTPCMFPFQYNQQWHHECTREGREDNLLWCATTSRYERDEKWGFCPD. Cystine bridges form between Cys178–Cys204, Cys192–Cys219, Cys260–Cys354, Cys330–Cys346, Cys406–Cys501, Cys478–Cys493, Cys617–Cys634, Cys699–Cys796, Cys774–Cys788, Cys840–Cys938, Cys915–Cys930, Cys992–Cys1096, Cys1068–Cys1088, Cys1209–Cys1223, Cys1280–Cys1377, and Cys1354–Cys1369. C-type lectin domains lie at 229 to 353, 357 to 500, 504 to 641, 646 to 795, 799 to 937, 941 to 1095, 1099 to 1230, and 1235 to 1376; these read CDAV…LPYV, YLNP…LFYL, TGLV…KAMS, PVEN…REWI, PRDV…MPSI, KKVW…YGFV, MQDA…LQGA, and PTET…KGFI. A glycan (N-linked (GlcNAc...) asparagine) is linked at Asn454. Asn1057 is a glycosylation site (N-linked (GlcNAc...) asparagine). Residues 1393–1421 form a helical membrane-spanning segment; the sequence is GPSHSVIPLTVALTLLVILAISTLSFCMY. Topologically, residues 1422–1463 are cytoplasmic; the sequence is KHSHIIFGRLAQFRNPYYPSANFSTVHLEENILISDLEKNDQ. Positions 1436–1442 match the Endocytosis signal motif; it reads NPYYPSA.

As to quaternary structure, interacts with sPLA2-IB/PLA2G1B; this interaction mediates intracellular signaling as well as clearance of extracellular sPLA2-IB/PLA2G1B via endocytotic pathway. Interacts with sPLA2-X/PLA2G10; this interaction mediates sPLA2-X/PLA2G10 clearance and inactivation. In terms of processing, the secretory phospholipase A2 receptor form may be produced by the action of metalloproteinases. It contains all extracellular domains and only lacks transmembrane and cytosolic regions. It is however unclear whether this form is produced by proteolytic cleavage as suggested by some experiments, or by alternative splicing.

It is found in the cell membrane. The protein resides in the secreted. Receptor for secretory phospholipase A2 (sPLA2). Also able to bind to snake PA2-like toxins. Although its precise function remains unclear, binding of sPLA2 to its receptor participates in both positive and negative regulation of sPLA2 functions as well as clearance of sPLA2. Binding of sPLA2-IB/PLA2G1B induces various effects depending on the cell type, such as activation of the mitogen-activated protein kinase (MAPK) cascade to induce cell proliferation, the production of lipid mediators, selective release of arachidonic acid in bone marrow-derived mast cells. In neutrophils, binding of sPLA2-IB/PLA2G1B can activate p38 MAPK to stimulate elastase release and cell adhesion. May be involved in responses in pro-inflammatory cytokine productions during endotoxic shock. Also has endocytic properties and rapidly internalizes sPLA2 ligands, which is particularly important for the clearance of extracellular sPLA2s to protect their potent enzymatic activities. The soluble secretory phospholipase A2 receptor form is circulating and acts as a negative regulator of sPLA2 functions by blocking the biological functions of sPLA2-IB/PLA2G1B and sPLA2-X/PLA2G10. The protein is Secretory phospholipase A2 receptor (PLA2R1) of Bos taurus (Bovine).